The chain runs to 647 residues: Phosphomethylpyrimidine synthase (647 aa).

Substrate-binding positions include asparagine 235, methionine 264, tyrosine 293, histidine 329, 349–351 (SRG), 390–393 (DGLR), and glutamate 429. Histidine 433 serves as a coordination point for Zn(2+). Tyrosine 456 provides a ligand contact to substrate. Histidine 497 contributes to the Zn(2+) binding site. The [4Fe-4S] cluster site is built by cysteine 577, cysteine 580, and cysteine 585. A disordered region spans residues 623-647 (KSAEFKASGSELYHPAVSHEEVAEG).

This sequence belongs to the ThiC family. In terms of assembly, homodimer. The cofactor is [4Fe-4S] cluster.

The enzyme catalyses 5-amino-1-(5-phospho-beta-D-ribosyl)imidazole + S-adenosyl-L-methionine = 4-amino-2-methyl-5-(phosphooxymethyl)pyrimidine + CO + 5'-deoxyadenosine + formate + L-methionine + 3 H(+). It participates in cofactor biosynthesis; thiamine diphosphate biosynthesis. Its function is as follows. Catalyzes the synthesis of the hydroxymethylpyrimidine phosphate (HMP-P) moiety of thiamine from aminoimidazole ribotide (AIR) in a radical S-adenosyl-L-methionine (SAM)-dependent reaction. The protein is Phosphomethylpyrimidine synthase of Vibrio vulnificus (strain CMCP6).